The chain runs to 283 residues: MKFAIFVNTTREKALELARELTAWLDARSIDYVFDPQSAKALGCGKWEEKADLSQHCDAFVALGGDGTLLLASHYSRSKPVVGINVGDLGFLTEFSPDEMWVAMDHLVSGNYSIHTRSQLEATLESGESLTSLNDVIFEKGSAARRLPAFTILLDDEMLGSYRADGIIIATSTGSTAYSMSAGGPIIAPKSNVFVITPICPHMLTVRPIVISDDKTIKISVDSQSGEFPLKMDGIQKKLLAPGEVVTVKKSPHHINLVANEKRNYCEILRKKLLWSHEHPTGE.

Residue D66 is the Proton acceptor of the active site. NAD(+) is bound by residues 66 to 67 (DG), 134 to 135 (ND), R145, R163, D165, and 176 to 181 (TAYSMS).

It belongs to the NAD kinase family. It depends on a divalent metal cation as a cofactor.

The protein resides in the cytoplasm. It catalyses the reaction NAD(+) + ATP = ADP + NADP(+) + H(+). Involved in the regulation of the intracellular balance of NAD and NADP, and is a key enzyme in the biosynthesis of NADP. Catalyzes specifically the phosphorylation on 2'-hydroxyl of the adenosine moiety of NAD to yield NADP. The chain is NAD kinase from Chlorobaculum tepidum (strain ATCC 49652 / DSM 12025 / NBRC 103806 / TLS) (Chlorobium tepidum).